A 110-amino-acid chain; its full sequence is T cell receptor alpha variable 22 (110 aa).

An N-terminal signal peptide occupies residues 1–21; that stretch reads MKRILGALLGLLSAQVCCVRG. One can recognise an Ig-like domain in the interval 22 to 110; sequence IQVEQSPPDL…DSGVYFCAVE (89 aa). 2 N-linked (GlcNAc...) asparagine glycosylation sites follow: asparagine 38 and asparagine 44. The cysteines at positions 43 and 107 are disulfide-linked.

Alpha-beta TR is a heterodimer composed of an alpha and beta chain; disulfide-linked. The alpha-beta TR is associated with the transmembrane signaling CD3 coreceptor proteins to form the TR-CD3 (TcR or TCR). The assembly of alpha-beta TR heterodimers with CD3 occurs in the endoplasmic reticulum where a single alpha-beta TR heterodimer associates with one CD3D-CD3E heterodimer, one CD3G-CD3E heterodimer and one CD247 homodimer forming a stable octameric structure. CD3D-CD3E and CD3G-CD3E heterodimers preferentially associate with TR alpha and TR beta chains, respectively. The association of the CD247 homodimer is the last step of TcR assembly in the endoplasmic reticulum and is required for transport to the cell surface.

It is found in the cell membrane. Functionally, v region of the variable domain of T cell receptor (TR) alpha chain that participates in the antigen recognition. Alpha-beta T cell receptors are antigen specific receptors which are essential to the immune response and are present on the cell surface of T lymphocytes. Recognize peptide-major histocompatibility (MH) (pMH) complexes that are displayed by antigen presenting cells (APC), a prerequisite for efficient T cell adaptive immunity against pathogens. Binding of alpha-beta TR to pMH complex initiates TR-CD3 clustering on the cell surface and intracellular activation of LCK that phosphorylates the ITAM motifs of CD3G, CD3D, CD3E and CD247 enabling the recruitment of ZAP70. In turn ZAP70 phosphorylates LAT, which recruits numerous signaling molecules to form the LAT signalosome. The LAT signalosome propagates signal branching to three major signaling pathways, the calcium, the mitogen-activated protein kinase (MAPK) kinase and the nuclear factor NF-kappa-B (NF-kB) pathways, leading to the mobilization of transcription factors that are critical for gene expression and essential for T cell growth and differentiation. The T cell repertoire is generated in the thymus, by V-(D)-J rearrangement. This repertoire is then shaped by intrathymic selection events to generate a peripheral T cell pool of self-MH restricted, non-autoaggressive T cells. Post-thymic interaction of alpha-beta TR with the pMH complexes shapes TR structural and functional avidity. The polypeptide is T cell receptor alpha variable 22 (Homo sapiens (Human)).